The primary structure comprises 450 residues: Probable glycylpeptide N-tetradecanoyltransferase (450 aa).

Residues M1 to V28 are disordered. Tetradecanoyl-CoA-binding residues include Q67, F68, W69, F200, L201, C202, V203, S209, R211, V212, and A213.

It belongs to the NMT family.

It is found in the cytoplasm. The catalysed reaction is N-terminal glycyl-[protein] + tetradecanoyl-CoA = N-tetradecanoylglycyl-[protein] + CoA + H(+). Its function is as follows. Adds a myristoyl group to the N-terminal glycine residue of certain cellular proteins. The sequence is that of Probable glycylpeptide N-tetradecanoyltransferase (nmt-1) from Caenorhabditis elegans.